Here is a 420-residue protein sequence, read N- to C-terminus: Probable pectate lyase C (420 aa).

The signal sequence occupies residues 1 to 20; it reads MKLSAPLLVSLAAFSQAVTA. 3 N-linked (GlcNAc...) asparagine glycosylation sites follow: Asn49, Asn165, and Asn202. The active site involves Arg205. In terms of domain architecture, EF-hand spans 262-297; that stretch reads NANFHGYVQNNYYDPDKDGQLDGFELGVSSSNYGGV. Ca(2+) is bound by residues Asp275, Asp277, Asp279, Gln281, and Glu286. A disordered region spans residues 358–396; the sequence is TMGGPGTLNGGTPAKDTDGDGIPDEAEKQLGTDPNTNDS. An N-linked (GlcNAc...) asparagine glycan is attached at Asn394.

This sequence belongs to the polysaccharide lyase 1 family. Ca(2+) serves as cofactor.

It localises to the secreted. It carries out the reaction Eliminative cleavage of (1-&gt;4)-alpha-D-galacturonan to give oligosaccharides with 4-deoxy-alpha-D-galact-4-enuronosyl groups at their non-reducing ends.. Its function is as follows. Pectinolytic enzyme consist of four classes of enzymes: pectin lyase, polygalacturonase, pectin methylesterase and rhamnogalacturonase. Among pectinolytic enzymes, pectin lyase is the most important in depolymerization of pectin, since it cleaves internal glycosidic bonds of highly methylated pectins. Favors pectate, the anion, over pectin, the methyl ester. This Aspergillus fumigatus (strain CBS 144.89 / FGSC A1163 / CEA10) (Neosartorya fumigata) protein is Probable pectate lyase C (plyC).